The following is a 225-amino-acid chain: Gene 30 protein (225 aa).

A disordered region spans residues arginine 48–alanine 73. The span at glutamate 51–alanine 73 shows a compositional bias: basic and acidic residues.

Its function is as follows. Essential for DNA synthesis. The protein is Gene 30 protein (30) of Bacillus phage SP01 (Bacteriophage SP01).